We begin with the raw amino-acid sequence, 694 residues long: Elongation factor G 1 (694 aa).

The 276-residue stretch at 5–280 (SRYRNIGIFA…AVVDYLPDPT (276 aa)) folds into the tr-type G domain. Residues 14–21 (AHVDAGKT), 78–82 (DTPGH), and 132–135 (NKLD) each bind GTP.

This sequence belongs to the TRAFAC class translation factor GTPase superfamily. Classic translation factor GTPase family. EF-G/EF-2 subfamily.

It is found in the cytoplasm. Functionally, catalyzes the GTP-dependent ribosomal translocation step during translation elongation. During this step, the ribosome changes from the pre-translocational (PRE) to the post-translocational (POST) state as the newly formed A-site-bound peptidyl-tRNA and P-site-bound deacylated tRNA move to the P and E sites, respectively. Catalyzes the coordinated movement of the two tRNA molecules, the mRNA and conformational changes in the ribosome. This chain is Elongation factor G 1, found in Methylococcus capsulatus (strain ATCC 33009 / NCIMB 11132 / Bath).